Consider the following 339-residue polypeptide: Cathepsin B (339 aa).

The first 17 residues, 1 to 17 (MWWLWASLCCLLALGDA), serve as a signal peptide directing secretion. The propeptide at 18–79 (RSRPSFHPLS…QRVMFTEDLK (62 aa)) is activation peptide. 6 disulfide bridges follow: Cys-93–Cys-122, Cys-105–Cys-150, Cys-141–Cys-207, Cys-142–Cys-146, Cys-179–Cys-211, and Cys-187–Cys-198. Cys-108 is a catalytic residue. An N-linked (GlcNAc...) asparagine glycan is attached at Asn-192. Residue Lys-220 is modified to N6-acetyllysine. Active-site residues include His-278 and Asn-298. Positions 334-339 (QYWEKI) are excised as a propeptide.

This sequence belongs to the peptidase C1 family. As to quaternary structure, dimer of a heavy chain and a light chain cross-linked by a disulfide bond. Interacts with SRPX2. Directly interacts with SHKBP1.

The protein localises to the lysosome. It localises to the melanosome. It is found in the secreted. Its subcellular location is the extracellular space. The protein resides in the apical cell membrane. It carries out the reaction Hydrolysis of proteins with broad specificity for peptide bonds. Preferentially cleaves -Arg-Arg-|-Xaa bonds in small molecule substrates (thus differing from cathepsin L). In addition to being an endopeptidase, shows peptidyl-dipeptidase activity, liberating C-terminal dipeptides.. Functionally, thiol protease which is believed to participate in intracellular degradation and turnover of proteins. Cleaves matrix extracellular phosphoglycoprotein MEPE. Involved in the solubilization of cross-linked TG/thyroglobulin in the thyroid follicle lumen. Has also been implicated in tumor invasion and metastasis. This chain is Cathepsin B (CTSB), found in Macaca fascicularis (Crab-eating macaque).